The following is a 904-amino-acid chain: MKQKKFNSKKSNRTDLSKRGDSPNIGISKSRTACKRCRLKKIKCDQEFPSCKRCAKLEVPCVSLDPATGKDVPRSYVFFLEDRLAVMMRVLKEYGVDPTKIRGNIPATSDDEPFDLKKYSSVSSLGEEGILPHNGLLADYLVQKGNSMASSAITSKSMASPQTINVQRKEFLVNSKKQDGSALLPETGSPMTSDARAEELRRCNKEISALGTMRESSFNSFLGDSSGISFAKLVFTATNFRQDSGDDVLDEDIKQREQKYNGYAEAENNPHFDPLELPPRHAAEVMISRFFVDTNSQLPLLHRELFLKKYFEPIYGPWNPNIALASDQTGINSAFEIPITSAFSAHTEPKRENVTEKIDVCSSVDVPWYDTWETSQKVNMRPIVELPTKFHIPYFFLNIIFAIGHATQVLKSDITTVATYKRRATKYIASLFSSSDRLEALAGTLLMVIYSIMRPNVPGVWYTMGSVLRLTVDLGLHSEKINKNYDAFTREIRRRLFWCVYSLDRQICSYFGRPFGIPEESITTRYPSLLDDSFITLTNREIDDYSDLPSPNPSSKVIALAMYKIRRIQASIVRILYAPGAELPRRFMDLESWRIETYNELERWFQVDVPKNFEMMNCKFNSIWFDLNYHYSKSILYGLSPKFPTLNDTAFKIVLDSTKGTIDVFYNLCVNKKIGYTWVAVHNMFMTGMTYLYVNFYSKNNINDCQEKVSEYTEKVLIVLKNLIGFCESAKTCYTSYKILSSVVIKLKFMQINDAKGIFSDSNPLTSQANRMSSYDKKTNVLGFDDGTFDNKVFNRTNFEEKAPFDIPLDEFFTELEKHSNVSQFNTLDVSEGNQVINESASTNTSSALNCQSYTNNQDIMDILFQVTSGSVWDEFFVRSGNGNEGESSYDISKGKNSESGGIF.

The span at 1–11 (MKQKKFNSKKS) shows a compositional bias: basic residues. The disordered stretch occupies residues 1 to 27 (MKQKKFNSKKSNRTDLSKRGDSPNIGI). The span at 12 to 21 (NRTDLSKRGD) shows a compositional bias: basic and acidic residues. The Zn(2+) site is built by cysteine 34, cysteine 37, cysteine 44, cysteine 51, cysteine 54, and cysteine 61. The zn(2)-C6 fungal-type DNA-binding region spans 34-61 (CKRCRLKKIKCDQEFPSCKRCAKLEVPC). The interval 883 to 904 (GNEGESSYDISKGKNSESGGIF) is disordered.

Binds DNA as a homodimer.

Its subcellular location is the nucleus. In terms of biological role, positive regulator of URA1 and URA3 expression. This is Pyrimidine pathway regulatory protein 1 (PPR1) from Saccharomyces cerevisiae (strain ATCC 204508 / S288c) (Baker's yeast).